A 255-amino-acid chain; its full sequence is Small ribosomal subunit protein uS2 (255 aa).

The segment at 232–255 (ASGRDLGASEEVPVEPALEEASEA) is disordered.

The protein belongs to the universal ribosomal protein uS2 family.

The chain is Small ribosomal subunit protein uS2 from Sinorhizobium medicae (strain WSM419) (Ensifer medicae).